Reading from the N-terminus, the 375-residue chain is MARGSGQLGGPHRDTVTMPKRGKRLKFRAHDACSGRVTVADYANSDPAVVRSGRVKKAVANAIQQEVKSLCGLEASQVPAEEALSGVGEPCDILDSSDEMDAQEESTQERSVSRKKKSKRHKEDPDGTGEEYPMDIWLLLASYIRPEDIVNFSLICKNAWTVTCTAAFWTRLYRRHYTLDASLPLRLRPESMEKLRCLRACVIRSLYHMYEPFAARISKNPAIPESTPSTLKNSKCLLFWCRKIVGNRQEPMWEFNFKFKKQSPRLKSKCMERLQPPIQYQDVHTNPDQDCCLLQVTTLNFIFIPIVMGMIFTLFTINVSTDMRHHRVRLVFQDSPVRGGQNLRSEQGVQVVLDPVHSVRLFDWWHPQYPFSLRA.

2 disordered regions span residues 1–21 (MARGSGQLGGPHRDTVTMPKR) and 94–128 (LDSSDEMDAQEESTQERSVSRKKKSKRHKEDPDGT). Residues 95 to 106 (DSSDEMDAQEES) are compositionally biased toward acidic residues. Residues 299-319 (LNFIFIPIVMGMIFTLFTINV) form a helical membrane-spanning segment.

It belongs to the TMEM183 family.

The protein localises to the membrane. In Mus musculus (Mouse), this protein is Transmembrane protein 183 (Tmem183).